Reading from the N-terminus, the 288-residue chain is MSSRKQGSQPRGQQSAEEENFKKPTRSNMQRSKMRGASSGKKTAGPQQKNLEPALPGRWGGRSAENPPSGSVRKTRKNKQKTPGNGDGGSTSEAPQPPRKKRARADPTVESEEAFKNRMEVKVKIPEELKPWLVEDWDLVTRQKQLFQLPAKKNVDAILEEYANCKKSQGNVDNKEYAVNEVVAGIKEYFNVMLGTQLLYKFERPQYAEILLAHPDAPMSQVYGAPHLLRLFVRIGAMLAYTPLDEKSLALLLGYLHDFLKYLAKNSASLFTASDYKVASAEYHRKAL.

Polar residues predominate over residues 1–15 (MSSRKQGSQPRGQQS). The tract at residues 1-113 (MSSRKQGSQP…RADPTVESEE (113 aa)) is disordered. Position 71 is a phosphoserine (S71). One can recognise an MRG domain in the interval 117 to 288 (NRMEVKVKIP…ASAEYHRKAL (172 aa)).

Component of the NuA4 histone acetyltransferase complex which contains the catalytic subunit KAT5/TIP60 and the subunits EP400, TRRAP/PAF400, BRD8/SMAP, EPC1, DMAP1/DNMAP1, RUVBL1/TIP49, RUVBL2, ING3, actin, ACTL6A/BAF53A, MORF4L1/MRG15, MORF4L2/MRGX, MRGBP, YEATS4/GAS41 and VPS72/YL1. The NuA4 complex interacts with MYC and the adenovirus E1A protein. MORF4L1 may also participate in the formation of NuA4 related complexes which lack the KAT5/TIP60 catalytic subunit, but which include the SWI/SNF related protein SRCAP. Component of the MSIN3A histone deacetylase complex, which includes SIN3A, HDAC2, ARID4B, MORF4L1, RBBP4/RbAp48, and RBBP7/RbAp46. Interacts with MRFAP1 and RB1. May also interact with one or more as yet undefined members of the TLE (transducin-like enhancer of split) family of transcriptional repressors.

Its subcellular location is the nucleus. Its function is as follows. Component of the NuA4 histone acetyltransferase complex which is involved in transcriptional activation of select genes principally by acetylation of nucleosomal histone H4 and H2A. This modification may both alter nucleosome - DNA interactions and promote interaction of the modified histones with other proteins which positively regulate transcription. This complex may be required for the activation of transcriptional programs associated with oncogene and proto-oncogene mediated growth induction, tumor suppressor mediated growth arrest and replicative senescence, apoptosis, and DNA repair. The NuA4 complex ATPase and helicase activities seem to be, at least in part, contributed by the association of RUVBL1 and RUVBL2 with EP400. NuA4 may also play a direct role in DNA repair when directly recruited to sites of DNA damage. Also a component of the MSIN3A complex which acts to repress transcription by deacetylation of nucleosomal histones. This Homo sapiens (Human) protein is Mortality factor 4-like protein 2 (MORF4L2).